The following is a 68-amino-acid chain: UPF0435 protein Sca_1453 (68 aa).

This sequence belongs to the UPF0435 family.

This Staphylococcus carnosus (strain TM300) protein is UPF0435 protein Sca_1453.